Consider the following 244-residue polypeptide: MKSLWLDIGNTRLKYWITENQQIIEHAAELHLQSPADLLLGLIQHFKHQGLHRIGISSVLDTENNQRIQQILKWLEIPVVFAKVHAEYAGLQCGYEVPSQLGIDRWLQVLAVAEEKENYCIIGCGTALTIDLTKGKQHLGGYILPNLYLQRDALIQNTKGIKIPDSAFDNLNPGNNTVDAVHHGILLGLISTIESIMQQSPKKLLLTGGDAPLFAKFLQKYQPTVETDLLLKGLQQYIAHYPKD.

An ATP-binding site is contributed by 7–14 (DIGNTRLK). Substrate-binding positions include Y95 and 102 to 105 (GIDR). D104 acts as the Proton acceptor in catalysis. Residue T126 coordinates ATP. T177 contributes to the substrate binding site.

Belongs to the type III pantothenate kinase family. In terms of assembly, homodimer. NH4(+) is required as a cofactor. Requires K(+) as cofactor.

It localises to the cytoplasm. It carries out the reaction (R)-pantothenate + ATP = (R)-4'-phosphopantothenate + ADP + H(+). The protein operates within cofactor biosynthesis; coenzyme A biosynthesis; CoA from (R)-pantothenate: step 1/5. In terms of biological role, catalyzes the phosphorylation of pantothenate (Pan), the first step in CoA biosynthesis. This is Type III pantothenate kinase from Acinetobacter baumannii (strain AB307-0294).